The sequence spans 590 residues: MHRYRTHTCGALRDSNIGETVRLSGWCHRIRDHGGVLFVDLRDHYGITQCVVDPDSKAFGLAEKLRSEWVVRMEGKVRRRPEGTDNAELPTGQVELYVADIEVLGPAAELPLPVFGEQEYPEDIRLKYRFLDLRREKLHQNIMTRGAIIDSMRRRMKEQGFFEFQTPILTASSPEGARDFLVPSRIHPGKFYALPQAPQQYKQLLMMSGFDRYFQIAPCFRDEDPRADRLPGEFYQLDVEMSFVEQEDVFAAMEPVITGVFEDFAKGKPVTKGWPRIPFAEALRKYGTDKPDLRNPIEMQDVSEHFRGSGFKVFARMLEDTKNQVWAIPAPGGGSRAFCDRMNSWAQGEGQPGLGYIMWREGGEGAGPLANNIGPERTAAIRTQLGTKEGDAAFFVAGDPEKFWKFAGLARTKVGEELNLIDKDRFALAWIVDFPMYEYNEDDKKVDFSHNPFSMPQGGLEALQTKDPLTIKAFQYDIACNGYEIASGGIRNHKPEAMVKAFEIAGYGEQEVVDRFGGMYRAFQYGAPPHGGMAAGVDRIVMLLCGTTNLREISLFPMNQQAMDLLMGAPSEATTKQLRELHIRTNLPNK.

E175 contributes to the L-aspartate binding site. The interval 199-202 (QQYK) is aspartate. 2 residues coordinate L-aspartate: R221 and H450. 221–223 (RDE) lines the ATP pocket. E484 provides a ligand contact to ATP. R491 is a binding site for L-aspartate. Residue 536 to 539 (GVDR) coordinates ATP.

It belongs to the class-II aminoacyl-tRNA synthetase family. Type 1 subfamily. As to quaternary structure, homodimer.

The protein localises to the cytoplasm. It carries out the reaction tRNA(Asx) + L-aspartate + ATP = L-aspartyl-tRNA(Asx) + AMP + diphosphate. Functionally, aspartyl-tRNA synthetase with relaxed tRNA specificity since it is able to aspartylate not only its cognate tRNA(Asp) but also tRNA(Asn). Reaction proceeds in two steps: L-aspartate is first activated by ATP to form Asp-AMP and then transferred to the acceptor end of tRNA(Asp/Asn). The polypeptide is Aspartate--tRNA(Asp/Asn) ligase (Bradyrhizobium sp. (strain BTAi1 / ATCC BAA-1182)).